The primary structure comprises 140 residues: Small ribosomal subunit protein uS19 (140 aa).

The disordered stretch occupies residues 43-71; that stretch reads IERGLTTEQQKLRETVRDADPQKTANDPI. Positions 52 to 63 are enriched in basic and acidic residues; it reads QKLRETVRDADP.

The protein belongs to the universal ribosomal protein uS19 family.

Its function is as follows. Protein S19 forms a complex with S13 that binds strongly to the 16S ribosomal RNA. This Haloquadratum walsbyi (strain DSM 16790 / HBSQ001) protein is Small ribosomal subunit protein uS19.